The chain runs to 1940 residues: Myosin-13 (1940 aa).

Positions 33-82 (DSKKACFAMDDKEMYVKGMIQSRENDKVTVKTLDDRTLTLNSDQVFPMNP) constitute a Myosin N-terminal SH3-like domain. One can recognise a Myosin motor domain in the interval 86-782 (DKIEDMAMMT…LLGLLEEMRD (697 aa)). An N6,N6,N6-trimethyllysine modification is found at lysine 130. 179 to 186 (GESGAGKT) contacts ATP. Actin-binding regions lie at residues 659-681 (LNKL…IPNE) and 761-775 (RFGH…GLLG). The IQ domain occupies 785–814 (LVTLMTRTQAICRGYLMRVEFKKMMERRES). Positions 843-1940 (LLKSAEAERE…RDVGAQKMEE (1098 aa)) form a coiled coil. The disordered stretch occupies residues 1886–1940 (RQAEEAEEQANTQMSKCRRVQHELEEAEERADIAESQVNKLRAKSRDVGAQKMEE). Positions 1929–1940 (KSRDVGAQKMEE) are enriched in basic and acidic residues.

Belongs to the TRAFAC class myosin-kinesin ATPase superfamily. Myosin family. Muscle myosin is a hexameric protein that consists of 2 heavy chain subunits (MHC), 2 alkali light chain subunits (MLC) and 2 regulatory light chain subunits (MLC-2).

The protein resides in the cytoplasm. It localises to the myofibril. Functionally, fast twitching myosin mediating the high-velocity and low-tension contractions of specific striated muscles. The chain is Myosin-13 (MYH13) from Canis lupus familiaris (Dog).